We begin with the raw amino-acid sequence, 523 residues long: Vanin-like protein 3 (523 aa).

The signal sequence occupies residues 1–19 (MAVFLRRFLWLISFTLVLT). A CN hydrolase domain is found at 29 to 298 (YIAGVVEYRP…RKLLLAKVPL (270 aa)). N-linked (GlcNAc...) asparagine glycosylation occurs at asparagine 64. Residue glutamate 74 is the Proton acceptor of the active site. Lysine 167 functions as the Proton donor in the catalytic mechanism. Asparagine 177 and asparagine 192 each carry an N-linked (GlcNAc...) asparagine glycan. The active-site Nucleophile is cysteine 200. Asparagine 330 and asparagine 468 each carry an N-linked (GlcNAc...) asparagine glycan. Residue asparagine 498 is the site of GPI-anchor amidated asparagine attachment. The propeptide at 499 to 523 (GGAGRLGTLLFLLITPLIMMHLFRE) is removed in mature form.

This sequence belongs to the carbon-nitrogen hydrolase superfamily. BTD/VNN family. As to expression, expressed in third instar larvae.

It is found in the cell membrane. The protein is Vanin-like protein 3 of Drosophila melanogaster (Fruit fly).